The chain runs to 438 residues: MSEQRIIRPTPISGFPEWTPRIRSVELRWLDHIRRGFERYGFSSVETPSVEVLDVLLSKGETSQEIYTLQRLQADADDSSDARLGLHFDLTVPFARYVAQHFNDLVFPFKRYQIQRVWRGERPQEGRFREFTQCDIDVINVDRIPLHFDAELPRIVHEVLTGLDIPAWTLNINNRKVLQGFYEGLGITDPLAVIRAVDKLHKIGADAVREILIDQAGLSSDQAAACLELAEIRGSDTTVVDAVAKLGVSHPTLTAGLDELGEVLDELSDLPSGSVVADLSIARGLDYYTGTVYEATFNDDPGYGSICAGGRYENLAGQFIRRSLPGVGISIGLTRIFAKLVSEGRITGGRFCPTDVLVVLPSDERRSAALAVAAQLRERGFNTEVYHQAAKIGKQIQYAVKKDIPFVWFPPFDDGRPHEVKNLATGEQVEADPASWNG.

This sequence belongs to the class-II aminoacyl-tRNA synthetase family. Homodimer.

It localises to the cytoplasm. It carries out the reaction tRNA(His) + L-histidine + ATP = L-histidyl-tRNA(His) + AMP + diphosphate + H(+). The sequence is that of Histidine--tRNA ligase (hisS) from Thermobifida fusca (strain YX).